Reading from the N-terminus, the 481-residue chain is Proline--tRNA ligase (481 aa).

Belongs to the class-II aminoacyl-tRNA synthetase family. ProS type 3 subfamily. As to quaternary structure, homodimer.

It is found in the cytoplasm. The enzyme catalyses tRNA(Pro) + L-proline + ATP = L-prolyl-tRNA(Pro) + AMP + diphosphate. Catalyzes the attachment of proline to tRNA(Pro) in a two-step reaction: proline is first activated by ATP to form Pro-AMP and then transferred to the acceptor end of tRNA(Pro). The protein is Proline--tRNA ligase of Chlorobium phaeovibrioides (strain DSM 265 / 1930) (Prosthecochloris vibrioformis (strain DSM 265)).